The primary structure comprises 233 residues: tRNA (guanine-N(7)-)-methyltransferase (233 aa).

Residues Glu-65, Glu-90, Asp-117, and Asp-139 each coordinate S-adenosyl-L-methionine. Asp-139 is an active-site residue. Residues Lys-143, Asp-175, and 212-215 (TRYE) contribute to the substrate site.

Belongs to the class I-like SAM-binding methyltransferase superfamily. TrmB family.

It carries out the reaction guanosine(46) in tRNA + S-adenosyl-L-methionine = N(7)-methylguanosine(46) in tRNA + S-adenosyl-L-homocysteine. Its pathway is tRNA modification; N(7)-methylguanine-tRNA biosynthesis. Catalyzes the formation of N(7)-methylguanine at position 46 (m7G46) in tRNA. The protein is tRNA (guanine-N(7)-)-methyltransferase of Roseobacter denitrificans (strain ATCC 33942 / OCh 114) (Erythrobacter sp. (strain OCh 114)).